The chain runs to 476 residues: MNGYGSPYLYMGGPVSQPPRAPLQRTPKCARCRNHGVLSWLKGHKRYCRFKDCTCEKCILIIERQRVMAAQVALRRQQANESLESLIPDSLRALPGPPPPGDAAATAATASQSSPASQASQPPAPPRPATELAAAAALRWVAEPQPGTLPAQIAKPDLTEDRLGDSSSADNAAESFSDKDTDQRSSPDVVKSKNCFTPESPEIVSVDEGGYAVQKNGGNPESCPDSPKYHAEQSHLLIEGPSGTVSLPFSLKANRPPLEVLKKIFPNQKPTVLELILKGCGGDLVSAVEVLLSSRSSAAGAERTAEESLVLPSSGHIFEHTLGSYPISSSKWSVGSAFRVPDTLRFSADSSNVVPNPLAVPLQHPFPQPPRYPLMLRNTLARNQSSPFLPNDVTLWNTMTLQQQYQLRSQYVSPFPSNSTSVFRSSPVLSSRTTEDPRISIPDDGCPIVAKQSIYTEDDYDERSDSSDSRILNTSS.

The segment at residues 29-76 is a DNA-binding region (DM); it reads CARCRNHGVLSWLKGHKRYCRFKDCTCEKCILIIERQRVMAAQVALRR. Disordered regions lie at residues 89–130 and 147–195; these read DSLR…RPAT and GTLP…SKNC. The span at 102–121 shows a compositional bias: low complexity; it reads DAAATAATASQSSPASQASQ. Positions 176-185 are enriched in basic and acidic residues; that stretch reads FSDKDTDQRS. Residues 255–290 enclose the DMA domain; the sequence is RPPLEVLKKIFPNQKPTVLELILKGCGGDLVSAVEV. Residues 418-432 are compositionally biased toward polar residues; sequence NSTSVFRSSPVLSSR. The segment at 418–476 is disordered; sequence NSTSVFRSSPVLSSRTTEDPRISIPDDGCPIVAKQSIYTEDDYDERSDSSDSRILNTSS.

Belongs to the DMRT family.

It is found in the nucleus. Its function is as follows. Probable transcription factor that plays a role in configuring the spinal circuits controlling stride in vertebrates. Involved in neuronal specification within a specific subdivision of spinal cord neurons and in the development of a coordinated locomotor network controlling limb movements. May regulate transcription during sexual development. The polypeptide is Doublesex and mab-3 related transcription factor 3 (Dmrt3) (Rattus norvegicus (Rat)).